The chain runs to 508 residues: Replication factor C large subunit (508 aa).

Position 43 to 50 (43 to 50 (GSPGIGKT)) interacts with ATP. Positions 425 to 508 (AVEHSGGVFE…DQQSGLSDFM (84 aa)) are disordered. 2 stretches are compositionally biased toward acidic residues: residues 443–461 (GDSD…EESG) and 483–500 (TTDD…DDDQ).

The protein belongs to the activator 1 small subunits family. RfcL subfamily. Heteromultimer composed of small subunits (RfcS) and large subunits (RfcL).

In terms of biological role, part of the RFC clamp loader complex which loads the PCNA sliding clamp onto DNA. The sequence is that of Replication factor C large subunit from Haloarcula marismortui (strain ATCC 43049 / DSM 3752 / JCM 8966 / VKM B-1809) (Halobacterium marismortui).